An 820-amino-acid polypeptide reads, in one-letter code: SART-1 family protein DOT2 (820 aa).

Composition is skewed to basic and acidic residues over residues 1 to 156 (MEVE…DNRG), 210 to 219 (EEKRNAEKQR), and 426 to 445 (LGSRKDGRRQAMKEEKERIE). 8 disordered regions span residues 1–177 (MEVE…SALD), 210–248 (EEKRNAEKQRAQQLSRIFEEQDNLNQGENEDGEDGEHLS), 420–445 (GLGAEDLGSRKDGRRQAMKEEKERIE), 523–544 (SSTNQTTDDNTTTGDETQENTV), 564–617 (KPES…PDEN), 657–678 (KLVGIVDDDGGKESKDKESKDR), 729–748 (KLKQMKNSDTPSQSVQRMRE), and 762–820 (GHVK…RPKP). A Phosphoserine modification is found at serine 22. Coiled coils occupy residues 58–120 (RDKE…EKEK), 171–235 (KEAS…NLNQ), and 433–510 (RRQA…KEEA). Over residues 525 to 543 (TNQTTDDNTTTGDETQENT) the composition is skewed to low complexity. Residues 582-591 (VEVKEEHPDG) show a composition bias toward basic and acidic residues. Acidic residues predominate over residues 596–606 (NDTDMDAAEDS). 2 stretches are compositionally biased toward basic and acidic residues: residues 607-617 (SDTKEITPDEN) and 665-678 (DGGKESKDKESKDR). Composition is skewed to polar residues over residues 733 to 744 (MKNSDTPSQSVQ) and 767 to 776 (GQTSDPQSGF). Over residues 792-807 (GDRKVEHFLGIKRKSE) the composition is skewed to basic and acidic residues.

Belongs to the SNU66/SART1 family. In terms of tissue distribution, expressed in lateral root cap, columella, meristem and quiescent center (QC). Expressed in young leaves.

It is found in the nucleus. Its function is as follows. Plays a role in root, shoot and flower development. Probably required for normal root and shoot meristem organization and maintenance and the proper expression of PIN and PLT genes. Involved in leaf vasculature patterning. The protein is SART-1 family protein DOT2 of Arabidopsis thaliana (Mouse-ear cress).